We begin with the raw amino-acid sequence, 1906 residues long: A disintegrin and metalloproteinase with thrombospondin motifs 20 (1906 aa).

Positions 1–26 (MRVAKWLTGLLCPISLLLTGSWEVRF) are cleaved as a signal peptide. Residues 27–249 (HPRQEALVKT…RSQLHSRNKR (223 aa)) constitute a propeptide that is removed on maturation. 2 N-linked (GlcNAc...) asparagine glycosylation sites follow: N92 and N221. The tract at residues 201 to 222 (PCEVSENQMEKTALPSQSSRNT) is disordered. In terms of domain architecture, Peptidase M12B spans 255–464 (RYVEVMVTAD…GHGECLLDKP (210 aa)). 11 disulfide bridges follow: C330/C383, C359/C365, C377/C459, C415/C443, C486/C508, C497/C518, C503/C537, C531/C542, C565/C602, C569/C607, and C580/C592. Residue H399 coordinates Zn(2+). E400 is a catalytic residue. H403 and H409 together coordinate Zn(2+). Residues 465–552 (NGRTYDLSPQ…VTRDMETRPV (88 aa)) form the Disintegrin domain. The TSP type-1 1 domain maps to 553–608 (DGEWGPWGPYSSCSRTCGGGIKSTARLCDRPEPRNGGRYCVGRRMKFRSCNTDSCP). N714, N798, and N805 each carry an N-linked (GlcNAc...) asparagine glycan. The tract at residues 721-842 (AGVFNSAHYG…FNIPIEERSN (122 aa)) is spacer. 7 consecutive TSP type-1 domains span residues 843-901 (LFSW…MDCE), 906-962 (IIGK…GSCV), 962-1015 (VLTR…NCNE), 1017-1074 (PCPS…RACA), 1075-1131 (SWHV…APCL), 1148-1202 (RAAQ…LCFS), and 1203-1260 (PCGE…AACP). An N-linked (GlcNAc...) asparagine glycan is attached at N1057. Positions 1265–1295 (RAPSSSEQPSHVPSRNVPLTHKPGENQDQGA) are disordered. The segment covering 1266–1277 (APSSSEQPSHVP) has biased composition (polar residues). TSP type-1 domains lie at 1300 to 1351 (RGNQ…RHCG), 1354 to 1411 (PCPH…HACP), 1412 to 1465 (EDVS…KACR), 1468 to 1526 (RCPS…QDCM), 1527 to 1584 (RYQW…PHCK), 1585 to 1648 (YSVV…LRSC), and 1650 to 1706 (HVAT…NDCK). N1562 is a glycosylation site (N-linked (GlcNAc...) asparagine). The 200-residue stretch at 1707–1906 (LLTTCKELQV…MATGLSIQVL (200 aa)) folds into the GON domain. N1719, N1759, and N1777 each carry an N-linked (GlcNAc...) asparagine glycan.

The cofactor is Zn(2+). In terms of processing, the precursor is cleaved by a furin endopeptidase. Glycosylated. Can be O-fucosylated by POFUT2 on a serine or a threonine residue found within the consensus sequence C1-X(2)-(S/T)-C2-G of the TSP type-1 repeat domains where C1 and C2 are the first and second cysteine residue of the repeat, respectively. Fucosylated repeats can then be further glycosylated by the addition of a beta-1,3-glucose residue by the glucosyltransferase, B3GALTL. Fucosylation mediates the efficient secretion of ADAMTS family members. Can also be C-glycosylated with one or two mannose molecules on tryptophan residues within the consensus sequence W-X-X-W of the TPRs, and N-glycosylated. These other glycosylations can also facilitate secretion. In terms of tissue distribution, expressed at low level in testis and brain.

It is found in the secreted. It localises to the extracellular space. The protein resides in the extracellular matrix. In terms of biological role, may play a role in tissue-remodeling process occurring in both normal and pathological conditions. May have a protease-independent function in the transport from the endoplasmic reticulum to the Golgi apparatus of secretory cargos, mediated by the GON domain. This chain is A disintegrin and metalloproteinase with thrombospondin motifs 20 (Adamts20), found in Mus musculus (Mouse).